The primary structure comprises 226 residues: Uracil-DNA glycosylase (226 aa).

Catalysis depends on D64, which acts as the Proton acceptor.

This sequence belongs to the uracil-DNA glycosylase (UDG) superfamily. UNG family.

It localises to the cytoplasm. It catalyses the reaction Hydrolyzes single-stranded DNA or mismatched double-stranded DNA and polynucleotides, releasing free uracil.. Its function is as follows. Excises uracil residues from the DNA which can arise as a result of misincorporation of dUMP residues by DNA polymerase or due to deamination of cytosine. The sequence is that of Uracil-DNA glycosylase from Vibrio campbellii (strain ATCC BAA-1116).